Consider the following 335-residue polypeptide: Glyceraldehyde-3-phosphate dehydrogenase (335 aa).

NAD(+) is bound by residues T13–I14 and G111. S140–N142 serves as a coordination point for D-glyceraldehyde 3-phosphate. C141 functions as the Nucleophile in the catalytic mechanism. NAD(+) is bound at residue R169. D-glyceraldehyde 3-phosphate contacts are provided by residues T171 and H195–G196. Q300 contacts NAD(+).

This sequence belongs to the glyceraldehyde-3-phosphate dehydrogenase family. As to quaternary structure, homotetramer.

It localises to the cytoplasm. It catalyses the reaction D-glyceraldehyde 3-phosphate + phosphate + NADP(+) = (2R)-3-phospho-glyceroyl phosphate + NADPH + H(+). The enzyme catalyses D-glyceraldehyde 3-phosphate + phosphate + NAD(+) = (2R)-3-phospho-glyceroyl phosphate + NADH + H(+). Its pathway is carbohydrate degradation; glycolysis; pyruvate from D-glyceraldehyde 3-phosphate: step 1/5. The sequence is that of Glyceraldehyde-3-phosphate dehydrogenase from Methanosarcina mazei (strain ATCC BAA-159 / DSM 3647 / Goe1 / Go1 / JCM 11833 / OCM 88) (Methanosarcina frisia).